The primary structure comprises 155 residues: SsrA-binding protein (155 aa).

It belongs to the SmpB family.

Its subcellular location is the cytoplasm. Its function is as follows. Required for rescue of stalled ribosomes mediated by trans-translation. Binds to transfer-messenger RNA (tmRNA), required for stable association of tmRNA with ribosomes. tmRNA and SmpB together mimic tRNA shape, replacing the anticodon stem-loop with SmpB. tmRNA is encoded by the ssrA gene; the 2 termini fold to resemble tRNA(Ala) and it encodes a 'tag peptide', a short internal open reading frame. During trans-translation Ala-aminoacylated tmRNA acts like a tRNA, entering the A-site of stalled ribosomes, displacing the stalled mRNA. The ribosome then switches to translate the ORF on the tmRNA; the nascent peptide is terminated with the 'tag peptide' encoded by the tmRNA and targeted for degradation. The ribosome is freed to recommence translation, which seems to be the essential function of trans-translation. In Streptococcus pyogenes serotype M5 (strain Manfredo), this protein is SsrA-binding protein.